A 103-amino-acid chain; its full sequence is Large ribosomal subunit protein bL21 (103 aa).

Belongs to the bacterial ribosomal protein bL21 family. Part of the 50S ribosomal subunit. Contacts protein L20.

In terms of biological role, this protein binds to 23S rRNA in the presence of protein L20. The protein is Large ribosomal subunit protein bL21 of Variovorax paradoxus (strain S110).